A 206-amino-acid chain; its full sequence is Homoserine/homoserine lactone efflux protein (206 aa).

6 helical membrane-spanning segments follow: residues Trp5–Ile25, Gly45–Phe65, Ser68–Ile88, Phe117–Ile137, Ile148–Leu168, and Met182–Ser202.

It belongs to the Rht family.

The protein localises to the cell membrane. Functionally, conducts the efflux of homoserine and homoserine lactone. The sequence is that of Homoserine/homoserine lactone efflux protein (rhtB) from Escherichia coli O157:H7.